The chain runs to 540 residues: Membrane protein insertase YidC (540 aa).

Residues 6 to 26 (NILLIALALVSFLLFQQWQVA) traverse the membrane as a helical segment. The span at 36–47 (QAQSSSSLPAPS) shows a compositional bias: low complexity. Residues 36–63 (QAQSSSSLPAPSFADELDPVPGQQQASA) form a disordered region. The next 4 membrane-spanning stretches (helical) occupy residues 342–362 (AFIQ…TFIV), 417–437 (LGGC…YWAL), 455–475 (LSAQ…MFLI), and 496–516 (PVMF…YWLV).

This sequence belongs to the OXA1/ALB3/YidC family. Type 1 subfamily. As to quaternary structure, interacts with the Sec translocase complex via SecD. Specifically interacts with transmembrane segments of nascent integral membrane proteins during membrane integration.

It is found in the cell inner membrane. Functionally, required for the insertion and/or proper folding and/or complex formation of integral membrane proteins into the membrane. Involved in integration of membrane proteins that insert both dependently and independently of the Sec translocase complex, as well as at least some lipoproteins. Aids folding of multispanning membrane proteins. In Vibrio parahaemolyticus serotype O3:K6 (strain RIMD 2210633), this protein is Membrane protein insertase YidC.